We begin with the raw amino-acid sequence, 361 residues long: Queuine tRNA-ribosyltransferase (361 aa).

The active-site Proton acceptor is the aspartate 92. Substrate-binding positions include 92 to 96 (DSGGF), aspartate 146, glutamine 189, and glycine 216. The interval 247–253 (GVGKPAD) is RNA binding. The active-site Nucleophile is the aspartate 266. Positions 271-275 (TRSGR) are RNA binding; important for wobble base 34 recognition. Residues cysteine 304, cysteine 306, cysteine 309, and histidine 335 each coordinate Zn(2+).

The protein belongs to the queuine tRNA-ribosyltransferase family. As to quaternary structure, homodimer. Within each dimer, one monomer is responsible for RNA recognition and catalysis, while the other monomer binds to the replacement base PreQ1. Requires Zn(2+) as cofactor.

The catalysed reaction is 7-aminomethyl-7-carbaguanine + guanosine(34) in tRNA = 7-aminomethyl-7-carbaguanosine(34) in tRNA + guanine. Its pathway is tRNA modification; tRNA-queuosine biosynthesis. Catalyzes the base-exchange of a guanine (G) residue with the queuine precursor 7-aminomethyl-7-deazaguanine (PreQ1) at position 34 (anticodon wobble position) in tRNAs with GU(N) anticodons (tRNA-Asp, -Asn, -His and -Tyr). Catalysis occurs through a double-displacement mechanism. The nucleophile active site attacks the C1' of nucleotide 34 to detach the guanine base from the RNA, forming a covalent enzyme-RNA intermediate. The proton acceptor active site deprotonates the incoming PreQ1, allowing a nucleophilic attack on the C1' of the ribose to form the product. After dissociation, two additional enzymatic reactions on the tRNA convert PreQ1 to queuine (Q), resulting in the hypermodified nucleoside queuosine (7-(((4,5-cis-dihydroxy-2-cyclopenten-1-yl)amino)methyl)-7-deazaguanosine). This Rickettsia rickettsii (strain Iowa) protein is Queuine tRNA-ribosyltransferase.